The primary structure comprises 460 residues: Elongation factor 1-alpha (460 aa).

Gly-2 bears the N,N,N-trimethylglycine mark. Lys-3 is modified (N6,N6-dimethyllysine; alternate). Residue Lys-3 is modified to N6-methyllysine; alternate. Residues 6 to 241 (KTHINVVVIG…DSIEPPKRPT (236 aa)) enclose the tr-type G domain. A G1 region spans residues 15-22 (GHVDSGKS). 15 to 22 (GHVDSGKS) is a GTP binding site. A G2 region spans residues 71 to 75 (GITID). Position 80 is an N6,N6,N6-trimethyllysine (Lys-80). The tract at residues 92 to 95 (DAPG) is G3. Residues 92 to 96 (DAPGH) and 154 to 157 (NKMD) each bind GTP. The tract at residues 154–157 (NKMD) is G4. The G5 stretch occupies residues 193–195 (SGF). Lys-317 is subject to N6,N6-dimethyllysine; alternate. Position 317 is an N6-methyllysine; alternate (Lys-317). Lys-391 is subject to N6-methyllysine.

The protein belongs to the TRAFAC class translation factor GTPase superfamily. Classic translation factor GTPase family. EF-Tu/EF-1A subfamily.

The protein localises to the cytoplasm. In terms of biological role, this protein promotes the GTP-dependent binding of aminoacyl-tRNA to the A-site of ribosomes during protein biosynthesis. The polypeptide is Elongation factor 1-alpha (tef1) (Hypocrea jecorina (Trichoderma reesei)).